A 412-amino-acid polypeptide reads, in one-letter code: Putative competence-damage inducible protein (412 aa).

The protein belongs to the CinA family.

This Bacillus cereus (strain ATCC 10987 / NRS 248) protein is Putative competence-damage inducible protein.